Consider the following 229-residue polypeptide: RNA pyrophosphohydrolase (229 aa).

A Nudix hydrolase domain is found at 6 to 149 (GFRPNVGIIL…KRGVYEMALT (144 aa)). The Nudix box motif lies at 38–59 (GGIDRGETPEQAMFRELHEEVG). The interval 168 to 229 (SGMRPREAHE…QVLHPDPGKA (62 aa)) is disordered.

Belongs to the Nudix hydrolase family. RppH subfamily. The cofactor is a divalent metal cation.

Functionally, accelerates the degradation of transcripts by removing pyrophosphate from the 5'-end of triphosphorylated RNA, leading to a more labile monophosphorylated state that can stimulate subsequent ribonuclease cleavage. The protein is RNA pyrophosphohydrolase of Delftia acidovorans (strain DSM 14801 / SPH-1).